The primary structure comprises 143 residues: MKTTKVAKKEEVTRDWYLVDADNKVLGRMATEIANILRGKKKPIYTPSVDTGDFVVVVNAAKLQLTGNKLADKMYYHHTGFPGGIKSITAGKLIEKKPEDLIRKAVKGMLPKNKLARHMLKKLKVYAGPEHPHEAQQPKTLDI.

Belongs to the universal ribosomal protein uL13 family. In terms of assembly, part of the 50S ribosomal subunit.

In terms of biological role, this protein is one of the early assembly proteins of the 50S ribosomal subunit, although it is not seen to bind rRNA by itself. It is important during the early stages of 50S assembly. This is Large ribosomal subunit protein uL13 from Geobacter sulfurreducens (strain ATCC 51573 / DSM 12127 / PCA).